The chain runs to 393 residues: MAKESYKRDKPHVNIGTIGHVDHGKTTLTAAITSVLAKQGLALQRDFGSIDKAPEERERGITISTAHVEYQTKKRHYAHIDCPGHADYIKNMITGAAQMDGAILVVAGTDGPMPQTREHILLARQVNVPALVVFLNKVDIADPELLELVELELRELLTEYNFPGDDIPIIKGSALKALDGDPEGEKAIMELMDAVDEFIPEPVRDVDKPFLMPVEDVFSISGRGTVGTGRIERGRIKINEEVEIVGIKPTRKSVVTGIEMFQKLLDEGQAGDNAGLLLRGVDKTELERGMVIAKPGSIKPHTKFKAEVYILRKEEGGRHTPFFNGYRPQFYFRTTDVTGSVTLPEGVEMVMPGDNLSVEVELIVPIAMDEGLRFAIREGGRTVGAGSVTKIIE.

The tr-type G domain occupies 10-203 (KPHVNIGTIG…AVDEFIPEPV (194 aa)). The interval 19–26 (GHVDHGKT) is G1. 19 to 26 (GHVDHGKT) is a binding site for GTP. Residue Thr-26 participates in Mg(2+) binding. A G2 region spans residues 60 to 64 (GITIS). A G3 region spans residues 81–84 (DCPG). GTP-binding positions include 81–85 (DCPGH) and 136–139 (NKVD). The segment at 136-139 (NKVD) is G4. The segment at 173–175 (SAL) is G5.

The protein belongs to the TRAFAC class translation factor GTPase superfamily. Classic translation factor GTPase family. EF-Tu/EF-1A subfamily. Monomer.

The protein localises to the cytoplasm. The enzyme catalyses GTP + H2O = GDP + phosphate + H(+). GTP hydrolase that promotes the GTP-dependent binding of aminoacyl-tRNA to the A-site of ribosomes during protein biosynthesis. This chain is Elongation factor Tu, found in Chlorobium limicola (strain DSM 245 / NBRC 103803 / 6330).